The sequence spans 316 residues: Glutathione synthetase (316 aa).

An ATP-grasp domain is found at 125–310 (KLFTAWFSDL…ITGMLMDAIE (186 aa)). Residue 151–207 (WEKHSDIILKPLDGMGGASIFRVKEGDPNLGVIAETLTEHGTCYCMAQNYLPAIKDG) participates in ATP binding. Mg(2+) is bound by residues E281 and N283.

Belongs to the prokaryotic GSH synthase family. Requires Mg(2+) as cofactor. The cofactor is Mn(2+).

It catalyses the reaction gamma-L-glutamyl-L-cysteine + glycine + ATP = glutathione + ADP + phosphate + H(+). It participates in sulfur metabolism; glutathione biosynthesis; glutathione from L-cysteine and L-glutamate: step 2/2. This chain is Glutathione synthetase, found in Shigella flexneri.